A 231-amino-acid polypeptide reads, in one-letter code: NADH-ubiquinone oxidoreductase chain 4 (231 aa).

Helical transmembrane passes span 1–21 (PIAG…YGII), 34–54 (LFIP…LTCL), 61–80 (SLIA…AITI), 84–106 (WGLS…LFCL), 118–138 (VLIL…WWLL), and 156–178 (LLIM…LSML).

The protein belongs to the complex I subunit 4 family.

The protein resides in the mitochondrion membrane. It carries out the reaction a ubiquinone + NADH + 5 H(+)(in) = a ubiquinol + NAD(+) + 4 H(+)(out). In terms of biological role, core subunit of the mitochondrial membrane respiratory chain NADH dehydrogenase (Complex I) that is believed to belong to the minimal assembly required for catalysis. Complex I functions in the transfer of electrons from NADH to the respiratory chain. The immediate electron acceptor for the enzyme is believed to be ubiquinone. The sequence is that of NADH-ubiquinone oxidoreductase chain 4 (MT-ND4) from Azemiops feae (Fea's viper).